Here is a 266-residue protein sequence, read N- to C-terminus: NADP-dependent mannitol dehydrogenase (266 aa).

Residues T31, I33, N107, and R140 each coordinate NADP(+). S159 acts as the Proton donor in catalysis. NADP(+) contacts are provided by Y174, K178, I206, and T208. Residue Y174 is the Proton acceptor of the active site. Catalysis depends on K178, which acts as the Lowers pKa of active site Tyr.

The protein belongs to the short-chain dehydrogenases/reductases (SDR) family. Homotetramer.

It localises to the vacuole. The enzyme catalyses D-mannitol + NADP(+) = D-fructose + NADPH + H(+). The chain is NADP-dependent mannitol dehydrogenase from Alternaria alternata (Alternaria rot fungus).